The following is a 37-amino-acid chain: Neuropeptide Y1-like conopeptide (37 aa).

A Phenylalanine amide modification is found at phenylalanine 37.

The protein belongs to the NPY family. As to expression, expressed by the venom duct.

The protein localises to the secreted. Its function is as follows. Causes hyperactivity such as jumping, rapid circling and tail flicking, when intraventricularly injected into mice brain. The polypeptide is Neuropeptide Y1-like conopeptide (Conus betulinus (Beech cone)).